Reading from the N-terminus, the 299-residue chain is Putative peptidyl-prolyl cis-trans isomerase HP_0175 (299 aa).

The first 21 residues, 1–21 (MKKNILNLALVGALSTSFLMA), serve as a signal peptide directing secretion. The PpiC domain maps to 154–253 (KQEAHARHIL…FGYHIIYLIS (100 aa)).

The catalysed reaction is [protein]-peptidylproline (omega=180) = [protein]-peptidylproline (omega=0). The polypeptide is Putative peptidyl-prolyl cis-trans isomerase HP_0175 (Helicobacter pylori (strain ATCC 700392 / 26695) (Campylobacter pylori)).